We begin with the raw amino-acid sequence, 1120 residues long: Prophage side tail fiber protein homolog StfR (1120 aa).

Disordered regions lie at residues 129 to 154 (KSAS…SARA), 221 to 442 (SAST…ATRA), and 960 to 1021 (SGRA…AGAH). Low complexity-rich tracts occupy residues 221–239 (SAST…ARDA), 248–395 (SSET…SASA), and 402–442 (RQAS…ATRA). Positions 985–1021 (DLGTKTTSSFDYGTKSTNNTGAHTHSVSGSTNSAGAH) are enriched in polar residues.

It belongs to the tail fiber family.

The chain is Prophage side tail fiber protein homolog StfR (stfR) from Escherichia coli (strain K12).